The following is a 650-amino-acid chain: Cytosolic Fe-S cluster assembly factor NAR1 (650 aa).

The [4Fe-4S] cluster site is built by Cys-22, Cys-81, Cys-84, Cys-87, Cys-215, Cys-270, Cys-480, and Cys-484.

Belongs to the NARF family.

Functionally, component of the cytosolic Fe/S protein assembly machinery. Required for maturation of extramitochondrial Fe/S proteins. May play a role in the transfer of pre-assembled Fe/S clusters to target apoproteins. The chain is Cytosolic Fe-S cluster assembly factor NAR1 (NAR1) from Cryptococcus neoformans var. neoformans serotype D (strain JEC21 / ATCC MYA-565) (Filobasidiella neoformans).